The primary structure comprises 63 residues: Sperm protamine P1 (63 aa).

The disordered stretch occupies residues 1–63; sequence MARYRRHSRS…RYSRRGRRRY (63 aa).

The protein belongs to the protamine P1 family. Testis.

The protein resides in the nucleus. It localises to the chromosome. Its function is as follows. Protamines substitute for histones in the chromatin of sperm during the haploid phase of spermatogenesis. They compact sperm DNA into a highly condensed, stable and inactive complex. The polypeptide is Sperm protamine P1 (PRM1) (Phascogale tapoatafa (Common wambenger)).